Reading from the N-terminus, the 239-residue chain is O-antigen export system ATP-binding protein RfbE (239 aa).

The ABC transporter domain occupies 28 to 239 (VRVSTGGRIG…LIYEESMDIL (212 aa)). 66-73 (GHNGAGKS) contributes to the ATP binding site.

The protein belongs to the ABC transporter superfamily.

The protein resides in the cell inner membrane. Functionally, may form an ATP-driven O-antigen export apparatus, in association with RfbD. The polypeptide is O-antigen export system ATP-binding protein RfbE (rfbE) (Yersinia enterocolitica).